The following is a 410-amino-acid chain: Probable peptidoglycan glycosyltransferase FtsW (410 aa).

9 helical membrane passes run 39-59 (LDPL…VMVY), 78-98 (YFLL…LAAF), 108-128 (FAPW…IPGV), 177-197 (GFLP…GEPD), 198-218 (FGAF…GGIN), 221-241 (VFAL…WLSP), 303-323 (IAEE…AILI), 342-362 (GLVA…NMGV), and 374-394 (LPLM…LAIL).

Belongs to the SEDS family. FtsW subfamily.

It localises to the cell inner membrane. The catalysed reaction is [GlcNAc-(1-&gt;4)-Mur2Ac(oyl-L-Ala-gamma-D-Glu-L-Lys-D-Ala-D-Ala)](n)-di-trans,octa-cis-undecaprenyl diphosphate + beta-D-GlcNAc-(1-&gt;4)-Mur2Ac(oyl-L-Ala-gamma-D-Glu-L-Lys-D-Ala-D-Ala)-di-trans,octa-cis-undecaprenyl diphosphate = [GlcNAc-(1-&gt;4)-Mur2Ac(oyl-L-Ala-gamma-D-Glu-L-Lys-D-Ala-D-Ala)](n+1)-di-trans,octa-cis-undecaprenyl diphosphate + di-trans,octa-cis-undecaprenyl diphosphate + H(+). Its pathway is cell wall biogenesis; peptidoglycan biosynthesis. Peptidoglycan polymerase that is essential for cell division. The protein is Probable peptidoglycan glycosyltransferase FtsW of Aromatoleum aromaticum (strain DSM 19018 / LMG 30748 / EbN1) (Azoarcus sp. (strain EbN1)).